Here is a 295-residue protein sequence, read N- to C-terminus: uncharacterized protein (295 aa).

This is an uncharacterized protein from Methanocaldococcus jannaschii (strain ATCC 43067 / DSM 2661 / JAL-1 / JCM 10045 / NBRC 100440) (Methanococcus jannaschii).